A 336-amino-acid chain; its full sequence is Histidinol-phosphate aminotransferase (336 aa).

Lys204 carries the post-translational modification N6-(pyridoxal phosphate)lysine.

This sequence belongs to the class-II pyridoxal-phosphate-dependent aminotransferase family. Histidinol-phosphate aminotransferase subfamily. Pyridoxal 5'-phosphate serves as cofactor.

It carries out the reaction L-histidinol phosphate + 2-oxoglutarate = 3-(imidazol-4-yl)-2-oxopropyl phosphate + L-glutamate. It functions in the pathway amino-acid biosynthesis; L-histidine biosynthesis; L-histidine from 5-phospho-alpha-D-ribose 1-diphosphate: step 7/9. The polypeptide is Histidinol-phosphate aminotransferase (Thermococcus kodakarensis (strain ATCC BAA-918 / JCM 12380 / KOD1) (Pyrococcus kodakaraensis (strain KOD1))).